The primary structure comprises 235 residues: MRKQRIVIKISGACLKQNDSSIIDFIKINDLAEQIEKISKKYIVSIVLGGGNIWRGSIAKELDMDRNLADNMGMMATIINGLALENALNHLNVNTIVLSAIKCDKLVHESSANNIKKAIEKEQVMIFVAGTGFPYFTTDSCAAIRAAETESSIILMGKNGVDGVYDSDPKINPNAQFYEHITFNMALTQNLKVMDATALALCQENNINLLVFNIDKPNAIVDVLEKKNKYTIVSK.

9 to 12 is an ATP binding site; the sequence is KISG. Gly50 serves as a coordination point for UMP. Residues Gly51 and Arg55 each coordinate ATP. Residues Asp70 and 131-138 contribute to the UMP site; that span reads TGFPYFTT. ATP is bound by residues Asn159, Tyr165, and Asp168.

The protein belongs to the UMP kinase family. In terms of assembly, homohexamer; trimer of dimers.

The protein resides in the cytoplasm. It carries out the reaction UMP + ATP = UDP + ADP. Its pathway is pyrimidine metabolism; CTP biosynthesis via de novo pathway; UDP from UMP (UMPK route): step 1/1. Unlike other bacteria, is not activated by GTP. UTP is a competitive inhibitor against UMP and a non-competitive inhibitor toward ATP. Its function is as follows. Catalyzes the reversible phosphorylation of UMP to UDP, with ATP as the most efficient phosphate donor. Is also able to phosphorylate dUMP. The polypeptide is Uridylate kinase (pyrH) (Ureaplasma parvum serovar 3 (strain ATCC 700970)).